Reading from the N-terminus, the 159-residue chain is D-aminoacyl-tRNA deacylase (159 aa).

The Gly-cisPro motif, important for rejection of L-amino acids signature appears at 142–143 (GP).

This sequence belongs to the DTD family. As to quaternary structure, homodimer.

It localises to the cytoplasm. It catalyses the reaction glycyl-tRNA(Ala) + H2O = tRNA(Ala) + glycine + H(+). It carries out the reaction a D-aminoacyl-tRNA + H2O = a tRNA + a D-alpha-amino acid + H(+). An aminoacyl-tRNA editing enzyme that deacylates mischarged D-aminoacyl-tRNAs. Also deacylates mischarged glycyl-tRNA(Ala), protecting cells against glycine mischarging by AlaRS. Acts via tRNA-based rather than protein-based catalysis; rejects L-amino acids rather than detecting D-amino acids in the active site. By recycling D-aminoacyl-tRNA to D-amino acids and free tRNA molecules, this enzyme counteracts the toxicity associated with the formation of D-aminoacyl-tRNA entities in vivo and helps enforce protein L-homochirality. This chain is D-aminoacyl-tRNA deacylase, found in Albidiferax ferrireducens (strain ATCC BAA-621 / DSM 15236 / T118) (Rhodoferax ferrireducens).